The following is a 185-amino-acid chain: ADP-ribose 1''-phosphate phosphatase (185 aa).

Positions 1–185 (MSPARLRITD…VVEVVAWERA (185 aa)) constitute a Macro domain. Residues 13–15 (GDL), 27–29 (ACN), 34–39 (WGGGIA), and 142–148 (INAGLFA) each bind substrate.

The protein belongs to the POA1 family.

It catalyses the reaction ADP-alpha-D-ribose 1''-phosphate + H2O = ADP-D-ribose + phosphate. Its function is as follows. Highly specific phosphatase involved in the metabolism of ADP-ribose 1''-phosphate (Appr1p) which is produced as a consequence of tRNA splicing. This Chaetomium globosum (strain ATCC 6205 / CBS 148.51 / DSM 1962 / NBRC 6347 / NRRL 1970) (Soil fungus) protein is ADP-ribose 1''-phosphate phosphatase (POA1).